A 103-amino-acid polypeptide reads, in one-letter code: Putative glutaredoxin-C14 (103 aa).

A Glutaredoxin domain is found at 1 to 102 (MDRVMKLASE…PMLKNAGALW (102 aa)). Cys-21 and Cys-24 are disulfide-bonded. The Responsive for interaction with TGA factors motif lies at 100–103 (ALWL).

Belongs to the glutaredoxin family. CC-type subfamily.

It localises to the cytoplasm. It is found in the nucleus. Has a glutathione-disulfide oxidoreductase activity in the presence of NADPH and glutathione reductase. Reduces low molecular weight disulfides and proteins. The chain is Putative glutaredoxin-C14 (GRXC14) from Oryza sativa subsp. japonica (Rice).